The chain runs to 586 residues: CTP synthase 2 (586 aa).

Residues 300–554 (SIALVGKYTK…LAATGNLNAH (255 aa)) form the Glutamine amidotransferase type-1 domain. Catalysis depends on for GATase activity residues Cys399, His526, and Glu528. Phosphoserine occurs at positions 568, 571, and 574.

It belongs to the CTP synthase family.

The enzyme catalyses UTP + L-glutamine + ATP + H2O = CTP + L-glutamate + ADP + phosphate + 2 H(+). The protein operates within pyrimidine metabolism; CTP biosynthesis via de novo pathway; CTP from UDP: step 2/2. In terms of biological role, catalyzes the ATP-dependent amination of UTP to CTP with either L-glutamine or ammonia as the source of nitrogen. Constitutes the rate-limiting enzyme in the synthesis of cytosine nucleotides. In Mus musculus (Mouse), this protein is CTP synthase 2 (Ctps2).